The chain runs to 232 residues: Phosphatidylserine decarboxylase proenzyme (232 aa).

The Schiff-base intermediate with substrate; via pyruvic acid role is filled by Ser190. A Pyruvic acid (Ser); by autocatalysis modification is found at Ser190.

It belongs to the phosphatidylserine decarboxylase family. PSD-A subfamily. Heterodimer of a large membrane-associated beta subunit and a small pyruvoyl-containing alpha subunit. The cofactor is pyruvate. In terms of processing, is synthesized initially as an inactive proenzyme. Formation of the active enzyme involves a self-maturation process in which the active site pyruvoyl group is generated from an internal serine residue via an autocatalytic post-translational modification. Two non-identical subunits are generated from the proenzyme in this reaction, and the pyruvate is formed at the N-terminus of the alpha chain, which is derived from the carboxyl end of the proenzyme. The post-translation cleavage follows an unusual pathway, termed non-hydrolytic serinolysis, in which the side chain hydroxyl group of the serine supplies its oxygen atom to form the C-terminus of the beta chain, while the remainder of the serine residue undergoes an oxidative deamination to produce ammonia and the pyruvoyl prosthetic group on the alpha chain.

Its subcellular location is the cell membrane. It carries out the reaction a 1,2-diacyl-sn-glycero-3-phospho-L-serine + H(+) = a 1,2-diacyl-sn-glycero-3-phosphoethanolamine + CO2. Its pathway is phospholipid metabolism; phosphatidylethanolamine biosynthesis; phosphatidylethanolamine from CDP-diacylglycerol: step 2/2. Catalyzes the formation of phosphatidylethanolamine (PtdEtn) from phosphatidylserine (PtdSer). The chain is Phosphatidylserine decarboxylase proenzyme from Sinorhizobium medicae (strain WSM419) (Ensifer medicae).